The primary structure comprises 189 residues: PTS system glucose-specific EIIA component (189 aa).

A PTS EIIA type-1 domain is found at 31–135 (DEAFAEKIVG…SVITPVVIAN (105 aa)). Zn(2+) is bound by residues histidine 68 and histidine 83. The active-site Tele-phosphohistidine intermediate; for EIIA activity is histidine 83. Histidine 83 carries the post-translational modification Phosphohistidine; by HPr.

In terms of assembly, heterodimer with glycerol kinase (glpk). Requires Zn(2+) as cofactor.

The protein localises to the cytoplasm. Its function is as follows. The phosphoenolpyruvate-dependent sugar phosphotransferase system (sugar PTS), a major carbohydrate active transport system, catalyzes the phosphorylation of incoming sugar substrates concomitantly with their translocation across the cell membrane. The enzyme II complex composed of PtsG and Crr is involved in glucose transport. In Borreliella burgdorferi (strain ATCC 35210 / DSM 4680 / CIP 102532 / B31) (Borrelia burgdorferi), this protein is PTS system glucose-specific EIIA component (crr).